Reading from the N-terminus, the 124-residue chain is Small ribosomal subunit protein uS12 (124 aa).

Residue aspartate 89 is modified to 3-methylthioaspartic acid.

This sequence belongs to the universal ribosomal protein uS12 family. In terms of assembly, part of the 30S ribosomal subunit. Contacts proteins S8 and S17. May interact with IF1 in the 30S initiation complex.

Functionally, with S4 and S5 plays an important role in translational accuracy. Interacts with and stabilizes bases of the 16S rRNA that are involved in tRNA selection in the A site and with the mRNA backbone. Located at the interface of the 30S and 50S subunits, it traverses the body of the 30S subunit contacting proteins on the other side and probably holding the rRNA structure together. The combined cluster of proteins S8, S12 and S17 appears to hold together the shoulder and platform of the 30S subunit. The chain is Small ribosomal subunit protein uS12 from Mannheimia succiniciproducens (strain KCTC 0769BP / MBEL55E).